The chain runs to 277 residues: Putative protease slr0021 (277 aa).

The active-site Nucleophile is Ser85. Lys137 functions as the Proton donor/acceptor in the catalytic mechanism.

It belongs to the peptidase S49 family.

The polypeptide is Putative protease slr0021 (Synechocystis sp. (strain ATCC 27184 / PCC 6803 / Kazusa)).